Consider the following 456-residue polypeptide: tRNA-2-methylthio-N(6)-dimethylallyladenosine synthase (456 aa).

The MTTase N-terminal domain occupies 13 to 129; the sequence is RYLYVRTFGC…IASLLEEVER (117 aa). Residues cysteine 22, cysteine 58, cysteine 92, cysteine 168, cysteine 172, and cysteine 175 each contribute to the [4Fe-4S] cluster site. One can recognise a Radical SAM core domain in the interval 154–384; it reads GTGDVVAQVT…QSIQADITLQ (231 aa). Residues 387 to 450 enclose the TRAM domain; the sequence is LAETGTVREV…SHSLKGELLS (64 aa).

It belongs to the methylthiotransferase family. MiaB subfamily. Monomer. [4Fe-4S] cluster serves as cofactor.

It is found in the cytoplasm. It catalyses the reaction N(6)-dimethylallyladenosine(37) in tRNA + (sulfur carrier)-SH + AH2 + 2 S-adenosyl-L-methionine = 2-methylsulfanyl-N(6)-dimethylallyladenosine(37) in tRNA + (sulfur carrier)-H + 5'-deoxyadenosine + L-methionine + A + S-adenosyl-L-homocysteine + 2 H(+). In terms of biological role, catalyzes the methylthiolation of N6-(dimethylallyl)adenosine (i(6)A), leading to the formation of 2-methylthio-N6-(dimethylallyl)adenosine (ms(2)i(6)A) at position 37 in tRNAs that read codons beginning with uridine. This Syntrophobacter fumaroxidans (strain DSM 10017 / MPOB) protein is tRNA-2-methylthio-N(6)-dimethylallyladenosine synthase.